A 231-amino-acid chain; its full sequence is Putative cobalt transport protein CbiM 2 (231 aa).

6 consecutive transmembrane segments (helical) span residues 8-28, 41-61, 75-95, 108-128, 136-156, and 176-196; these read LPIGWCIFWAVLSAPFVIYGI, VLPLMAVCGAFVFVLSALKIP, LSAAFFGPFITSVLGTIVLLF, LGANVFSMAIAGPFIAWLVFV, VGIGVAVFITAAVANLVTYTV, and IAFAGIFAVTQIPLAIIEGII.

This sequence belongs to the CbiM family. Forms an energy-coupling factor (ECF) transporter complex composed of an ATP-binding protein (A component, CbiO), a transmembrane protein (T component, CbiQ) and 2 possible substrate-capture proteins (S components, CbiM and CbiN) of unknown stoichimetry.

The protein resides in the cell membrane. It functions in the pathway cofactor biosynthesis; adenosylcobalamin biosynthesis. Part of the energy-coupling factor (ECF) transporter complex CbiMNOQ involved in cobalt import. This chain is Putative cobalt transport protein CbiM 2, found in Methanocorpusculum labreanum (strain ATCC 43576 / DSM 4855 / Z).